Consider the following 441-residue polypeptide: Platelet-activating factor acetylhydrolase (441 aa).

A signal peptide spans 1–21 (MVPPKLHVLFCLCGCLAVVYP). Ser273 functions as the Nucleophile in the catalytic mechanism. Catalysis depends on charge relay system residues Asp296 and His351. Asn423 and Asn433 each carry an N-linked (GlcNAc...) asparagine glycan.

Belongs to the AB hydrolase superfamily. Lipase family. Post-translationally, N-glycosylated. Macrophage-derived PLA2G7 carries sialylated complex-type N-glycans that hinder its binding to HDL particles. In terms of tissue distribution, plasma. Secreted by macrophages (at protein level).

It is found in the secreted. The protein resides in the extracellular space. It carries out the reaction a 1-O-alkyl-2-acetyl-sn-glycero-3-phosphocholine + H2O = a 1-O-alkyl-sn-glycero-3-phosphocholine + acetate + H(+). It catalyses the reaction 1-O-decyl-2-acetyl-sn-glycero-3-phosphocholine + H2O = 1-O-decyl-sn-glycero-3-phosphocholine + acetate + H(+). The catalysed reaction is 1-O-dodecyl-2-acetyl-sn-glycero-3-phosphocholine + H2O = 1-O-dodecyl-sn-glycero-3-phosphocholine + acetate + H(+). The enzyme catalyses 1-O-tetradecyl-2-acetyl-sn-glycero-3-phosphocholine + H2O = 1-O-tetradecyl-sn-glycero-3-phosphocholine + acetate + H(+). It carries out the reaction 1-O-hexadecyl-2-acetyl-sn-glycero-3-phosphocholine + H2O = 1-O-hexadecyl-sn-glycero-3-phosphocholine + acetate + H(+). It catalyses the reaction 1-O-octadecyl-2-acetyl-sn-glycero-3-phosphocholine + H2O = 1-O-octadecyl-sn-glycero-3-phosphocholine + acetate + H(+). The catalysed reaction is 1-hexadecanoyl-2-acetyl-sn-glycero-3-phosphocholine + H2O = 1-hexadecanoyl-sn-glycero-3-phosphocholine + acetate + H(+). The enzyme catalyses 1-hexadecanoyl-2-propionyl-sn-glycero-3-phosphocholine + H2O = propanoate + 1-hexadecanoyl-sn-glycero-3-phosphocholine + H(+). It carries out the reaction 1-hexadecanoyl-2-butanoyl-sn-glycero-3-phosphocholine + H2O = butanoate + 1-hexadecanoyl-sn-glycero-3-phosphocholine + H(+). It catalyses the reaction 1-hexadecanoyl-2-pentanoyl-sn-glycero-3-phosphocholine + H2O = pentanoate + 1-hexadecanoyl-sn-glycero-3-phosphocholine + H(+). The catalysed reaction is 1-hexadecanoyl-2-glutaroyl-sn-glycero-3-phosphocholine + H2O = glutarate + 1-hexadecanoyl-sn-glycero-3-phosphocholine + H(+). The enzyme catalyses 1-hexadecanoyl-2-(5-oxopentanoyl)-sn-glycero-3-phosphocholine + H2O = 5-oxopentanoate + 1-hexadecanoyl-sn-glycero-3-phosphocholine + H(+). It carries out the reaction 1-hexadecanoyl-2-(9-oxononanoyl)-sn-glycero-3-phosphocholine + H2O = 9-oxononanoate + 1-hexadecanoyl-sn-glycero-3-phosphocholine + H(+). It catalyses the reaction 1-hexadecanoyl-2-[9-hydroperoxy-(10E-octadecenoyl)]-sn-glycero-3-phosphocholine + H2O = 9-hydroperoxy-10E-octadecenoate + 1-hexadecanoyl-sn-glycero-3-phosphocholine + H(+). The catalysed reaction is 1-hexadecanoyl-2-(10-hydroperoxy-8E-octadecenoyl)-sn-glycero-3-phosphocholine + H2O = 10-hydroperoxy-(8E)-octadecenoate + 1-hexadecanoyl-sn-glycero-3-phosphocholine + H(+). Lipoprotein-associated calcium-independent phospholipase A2 involved in phospholipid catabolism during inflammatory and oxidative stress response. At the lipid-aqueous interface, hydrolyzes the ester bond of fatty acyl group attached at sn-2 position of phospholipids (phospholipase A2 activity). Specifically targets phospholipids with a short-chain fatty acyl group at sn-2 position. Can hydrolyze phospholipids with long fatty acyl chains, only if they carry oxidized functional groups. Hydrolyzes and inactivates platelet-activating factor (PAF, 1-O-alkyl-2-acetyl-sn-glycero-3-phosphocholine), a potent pro-inflammatory signaling lipid that acts through PTAFR on various innate immune cells. Hydrolyzes oxidatively truncated phospholipids carrying an aldehyde group at omega position, preventing their accumulation in low-density lipoprotein (LDL) particles and uncontrolled pro-inflammatory effects. As part of high-density lipoprotein (HDL) particles, can hydrolyze phospholipids having long-chain fatty acyl hydroperoxides at sn-2 position and protect against potential accumulation of these oxylipins in the vascular wall. Catalyzes the release from membrane phospholipids of F2-isoprostanes, lipid biomarkers of cellular oxidative damage. In Homo sapiens (Human), this protein is Platelet-activating factor acetylhydrolase (PLA2G7).